Consider the following 111-residue polypeptide: Probable 4-amino-4-deoxy-L-arabinose-phosphoundecaprenol flippase subunit ArnE (111 aa).

Transmembrane regions (helical) follow at residues Leu-38–Leu-58, Leu-61–Ala-81, and Pro-91–Ala-111. An EamA domain is found at Leu-40–Ser-109.

It belongs to the ArnE family. In terms of assembly, heterodimer of ArnE and ArnF.

It localises to the cell inner membrane. It functions in the pathway bacterial outer membrane biogenesis; lipopolysaccharide biosynthesis. In terms of biological role, translocates 4-amino-4-deoxy-L-arabinose-phosphoundecaprenol (alpha-L-Ara4N-phosphoundecaprenol) from the cytoplasmic to the periplasmic side of the inner membrane. The protein is Probable 4-amino-4-deoxy-L-arabinose-phosphoundecaprenol flippase subunit ArnE of Salmonella paratyphi B (strain ATCC BAA-1250 / SPB7).